Reading from the N-terminus, the 296-residue chain is Light-inducible protein CPRF3 (296 aa).

3 disordered regions span residues 1–27 (MSDGEEGTPMKHPKPASSVEEAPITTT), 98–165 (PNLA…GSLE), and 190–223 (RVNDERELKRQRRKQSNRESARRSRLRKQAKSDE). Residues 107–117 (VGRKISDEKGR) show a composition bias toward basic and acidic residues. Residues 145–156 (SSSDNDCPSLSS) show a composition bias toward low complexity. A bZIP domain is found at 196 to 259 (ELKRQRRKQS…AEVTSENHSI (64 aa)). A basic motif region spans residues 198-220 (KRQRRKQSNRESARRSRLRKQAK). The leucine-zipper stretch occupies residues 224–245 (LQERLDNLSKENRILRKNLQRI).

The protein belongs to the bZIP family. As to quaternary structure, binds DNA as a dimer.

It is found in the nucleus. In terms of biological role, binds to the G-box-like motif (5'-ACGTGGC-3') of the chalcone synthase (CHS) gene promoter. G-box and G-box-like motifs are defined in promoters of certain plant genes which are regulated by such diverse stimuli as light-induction or hormone control. The polypeptide is Light-inducible protein CPRF3 (CPRF3) (Petroselinum crispum (Parsley)).